A 409-amino-acid polypeptide reads, in one-letter code: 23S rRNA (uracil(747)-C(5))-methyltransferase (409 aa).

C61, C67, C70, and C137 together coordinate [4Fe-4S] cluster. 4 residues coordinate S-adenosyl-L-methionine: Q251, Y277, E298, and D339. The active-site Nucleophile is the C365.

Belongs to the class I-like SAM-binding methyltransferase superfamily. RNA M5U methyltransferase family.

The enzyme catalyses uridine(747) in 23S rRNA + S-adenosyl-L-methionine = 5-methyluridine(747) in 23S rRNA + S-adenosyl-L-homocysteine + H(+). Its function is as follows. Catalyzes the formation of 5-methyl-uridine at position equivalent to 747 (m5U747) in 23S rRNA. This chain is 23S rRNA (uracil(747)-C(5))-methyltransferase, found in Pyrococcus furiosus (strain ATCC 43587 / DSM 3638 / JCM 8422 / Vc1).